Consider the following 2049-residue polypeptide: Kinetochore-associated protein rod-1 (2049 aa).

Component of the RZZ complex composed of rod-1, czw-1 and zwl-1. Interacts (via N-terminus) with NDC80 complex component ndc-80.

It is found in the chromosome. It localises to the centromere. Its subcellular location is the kinetochore. The protein localises to the cytoplasm. The protein resides in the cytoskeleton. It is found in the spindle. In terms of biological role, essential component of the mitotic checkpoint, which prevents cells from prematurely exiting mitosis. Required for chromosome segregation, the assembly of the dynein-dynactin and mdf-1-mdf-2 complexes onto kinetochores and spindle pole separation. Plays a role in nuclear envelope breakdown. Its function related to the spindle assembly machinery and kinetochore-microtubule attachments likely depends on its association in the mitotic RZZ complex. The RZZ complex recruits the spindly-like protein spdl-1 to kinetochores. To prevent irregular chromosome segregation, the complex also inhibits the attachment of the kinetochore-associated NDC80 complex to microtubules. The recruitment of spdl-1 to kinetochores relieves this inhibition. Required for embryonic development. The protein is Kinetochore-associated protein rod-1 of Caenorhabditis elegans.